A 123-amino-acid polypeptide reads, in one-letter code: Gamma-synuclein (123 aa).

A run of 2 repeats spans residues 20-30 and 31-41. A 4 X 11 AA tandem repeats of [EGSA]-K-T-K-[EQ]-[GQ]-V-X(4) region spans residues 20 to 67; the sequence is EKTKQGVTEAAEKTKEGVMYVGTKTKENVVQSVTSVAEKTKEQANAVS. The 3; approximate repeat unit spans residues 42–56; that stretch reads TKTKENVVQSVTSVA. Residues 57-67 form repeat 4; sequence EKTKEQANAVS. A phosphoserine mark is found at serine 67 and serine 72. The tract at residues 91-123 is disordered; sequence TTGVVRKEDLEPPAQDQEAKEQEENEEAKSGED. A compositionally biased stretch (basic and acidic residues) spans 107–123; it reads QEAKEQEENEEAKSGED. The residue at position 120 (serine 120) is a Phosphoserine; by BARK1, CaMK2 and CK2.

It belongs to the synuclein family. As to quaternary structure, may be a centrosome-associated protein. Interacts with MYOC; affects its secretion and its aggregation. Post-translationally, phosphorylated. Phosphorylation by GRK5 appears to occur on residues distinct from the residue phosphorylated by other kinases. In terms of tissue distribution, highly expressed in brain, particularly in the substantia nigra. Also expressed in the corpus callosum, heart, skeletal muscle, ovary, testis, colon and spleen. Weak expression in pancreas, kidney and lung. Expressed predominantly in the cell bodies and axons of primary sensory neurons, sympathetic neurons and motoneurons.

Its subcellular location is the cytoplasm. It is found in the perinuclear region. The protein resides in the cytoskeleton. The protein localises to the microtubule organizing center. It localises to the centrosome. Its subcellular location is the spindle. In terms of biological role, plays a role in neurofilament network integrity. May be involved in modulating axonal architecture during development and in the adult. In vitro, increases the susceptibility of neurofilament-H to calcium-dependent proteases. May also function in modulating the keratin network in skin. Activates the MAPK and Elk-1 signal transduction pathway. The protein is Gamma-synuclein (Sncg) of Mus musculus (Mouse).